We begin with the raw amino-acid sequence, 336 residues long: Monoacylglycerol lipase ABHD6 (336 aa).

The Extracellular portion of the chain corresponds to 1-8 (MDLDVVNM). Residues 9-29 (FVIAGGTLAIPILAFVASFLL) traverse the membrane as a helical; Signal-anchor for type II membrane protein segment. Over 30–336 (WPSALIRIYY…VHNTDNKKLN (307 aa)) the chain is Cytoplasmic. Serine 148 serves as the catalytic Nucleophile. Residues aspartate 278 and histidine 306 each act as charge relay system in the active site.

Belongs to the AB hydrolase superfamily. In terms of tissue distribution, widely expressed with higher expression in small intestine, liver and brown adipose tissue. In brain, expressed postsynaptically in cortical neurons but not detected in microglia (at protein level).

Its subcellular location is the late endosome membrane. It is found in the lysosome membrane. It localises to the mitochondrion membrane. The catalysed reaction is Hydrolyzes glycerol monoesters of long-chain fatty acids.. The enzyme catalyses 2-(5Z,8Z,11Z,14Z-eicosatetraenoyl)-glycerol + H2O = glycerol + (5Z,8Z,11Z,14Z)-eicosatetraenoate + H(+). It catalyses the reaction 1-octanoylglycerol + H2O = octanoate + glycerol + H(+). It carries out the reaction 1-decanoylglycerol + H2O = decanoate + glycerol + H(+). The catalysed reaction is 1-dodecanoylglycerol + H2O = dodecanoate + glycerol + H(+). The enzyme catalyses 1-tetradecanoylglycerol + H2O = tetradecanoate + glycerol + H(+). It catalyses the reaction 2-hexadecanoylglycerol + H2O = glycerol + hexadecanoate + H(+). It carries out the reaction 2-(9Z-octadecenoyl)-glycerol + H2O = glycerol + (9Z)-octadecenoate + H(+). The catalysed reaction is 1-(9Z-octadecenoyl)-glycerol + H2O = glycerol + (9Z)-octadecenoate + H(+). The enzyme catalyses 2-(9Z,12Z-octadecadienoyl)-glycerol + H2O = (9Z,12Z)-octadecadienoate + glycerol + H(+). It catalyses the reaction 1-(5Z,8Z,11Z,14Z-eicosatetraenoyl)-glycerol + H2O = glycerol + (5Z,8Z,11Z,14Z)-eicosatetraenoate + H(+). It carries out the reaction 1-(9Z,12Z-octadecadienoyl)-glycerol + H2O = (9Z,12Z)-octadecadienoate + glycerol + H(+). The catalysed reaction is 3-(9Z-octadecenoyl)-sn-glycero-1-phospho-(3'-(9Z-octadecenoyl)-1'-sn-glycerol) + H2O = 3-(9Z-octadecenoyl)-sn-glycero-1-phospho-(1'-sn-glycerol) + (9Z)-octadecenoate + H(+). The enzyme catalyses (S,S)-2-(9Z-octadecenoyl)-sn-glycero-1-phospho-(2'-(9Z-octadecenoyl)-1'-sn-glycerol) + H2O = (S,S)-2-(9Z-octadecenoyl)-sn-glycero-1-phospho-(1'-sn-glycerol) + (9Z)-octadecenoate + H(+). It catalyses the reaction (R,R)-2-(9Z-octadecenoyl)-sn-glycero-3-phospho-(2'-(9Z-octadecenoyl)-3'-sn-glycerol) + H2O = (R,R)-2-(9Z-octadecenoyl)-sn-glycero-3-phospho-(3'-sn-glycerol) + (9Z)-octadecenoate + H(+). Lipase that preferentially hydrolysis medium-chain saturated monoacylglycerols including 2-arachidonoylglycerol. Through 2-arachidonoylglycerol degradation may regulate endocannabinoid signaling pathways. Also has a lysophosphatidyl lipase activity with a preference for lysophosphatidylglycerol among other lysophospholipids. Also able to degrade bis(monoacylglycero)phosphate (BMP) and constitutes the major enzyme for BMP catabolism. BMP, also known as lysobisphosphatidic acid, is enriched in late endosomes and lysosomes and plays a key role in the formation of intraluminal vesicles and in lipid sorting. This is Monoacylglycerol lipase ABHD6 from Mus musculus (Mouse).